The chain runs to 229 residues: MSTFILGATGLVGSQIVKVAESSPAIKSITTLTRRTPDFANSSSKLKTLEESDSSKWSEIIKSQAVSSDVYLSAFGTTRAKAGSAENFKKIDYGINYSSAKAAKENGSKVCVLVSSMGANASSPFLYMKTKGELEDDIIKLGFDHTVILRPGALLGERKESHGLGNSIAQTIGNWTKGTWLQGLLKPIDASDVGKVAIDFAQKGINGELKDKVIIVGGDDLVKLANSLN.

Residues 1 to 36 (MSTFILGATGLVGSQIVKVAESSPAIKSITTLTRRT) constitute a mitochondrion transit peptide.

The protein belongs to the FMP52 family.

Its subcellular location is the mitochondrion outer membrane. In Candida albicans (strain SC5314 / ATCC MYA-2876) (Yeast), this protein is Protein FMP52, mitochondrial (FMP52).